The primary structure comprises 167 residues: CGG triplet repeat-binding protein 1 (167 aa).

Ser56 bears the Phosphoserine mark. Residues 65-86 (KTHTKRKAEFEEQNVRKKQRPL) are disordered. The Nuclear localization signal signature appears at 80 to 84 (RKKQR). At Ser164 the chain carries Phosphoserine.

Its subcellular location is the nucleus. Functionally, binds to nonmethylated 5'-d(CGG)(n)-3' trinucleotide repeats in the FMR1 promoter. May play a role in regulating FMR1 promoter. The sequence is that of CGG triplet repeat-binding protein 1 (Cggbp1) from Mus musculus (Mouse).